The primary structure comprises 66 residues: Cysteine proteinase inhibitor (66 aa).

The short motif at 18–22 is the Secondary area of contact element; that stretch reads QVVAG.

The protein belongs to the cystatin family. Phytocystatin subfamily. As to expression, in tubers of untreated plants. After ABA treatment or mechanical wounding is mostly accumulated in leaves, to a lesser extent in stems, but not in roots.

The protein is Cysteine proteinase inhibitor (CYS-PIN) of Solanum tuberosum (Potato).